Here is a 379-residue protein sequence, read N- to C-terminus: UDP-4-amino-4-deoxy-L-arabinose--oxoglutarate aminotransferase (379 aa).

N6-(pyridoxal phosphate)lysine is present on Lys182.

It belongs to the DegT/DnrJ/EryC1 family. ArnB subfamily. In terms of assembly, homodimer. It depends on pyridoxal 5'-phosphate as a cofactor.

It carries out the reaction UDP-4-amino-4-deoxy-beta-L-arabinose + 2-oxoglutarate = UDP-beta-L-threo-pentopyranos-4-ulose + L-glutamate. It participates in nucleotide-sugar biosynthesis; UDP-4-deoxy-4-formamido-beta-L-arabinose biosynthesis; UDP-4-deoxy-4-formamido-beta-L-arabinose from UDP-alpha-D-glucuronate: step 2/3. It functions in the pathway bacterial outer membrane biogenesis; lipopolysaccharide biosynthesis. In terms of biological role, catalyzes the conversion of UDP-4-keto-arabinose (UDP-Ara4O) to UDP-4-amino-4-deoxy-L-arabinose (UDP-L-Ara4N). The modified arabinose is attached to lipid A and is required for resistance to polymyxin and cationic antimicrobial peptides. The chain is UDP-4-amino-4-deoxy-L-arabinose--oxoglutarate aminotransferase from Escherichia fergusonii (strain ATCC 35469 / DSM 13698 / CCUG 18766 / IAM 14443 / JCM 21226 / LMG 7866 / NBRC 102419 / NCTC 12128 / CDC 0568-73).